A 184-amino-acid polypeptide reads, in one-letter code: Probable chorismate pyruvate-lyase 1 (184 aa).

Substrate contacts are provided by R70, L108, and E166.

This sequence belongs to the UbiC family.

The protein resides in the cytoplasm. The catalysed reaction is chorismate = 4-hydroxybenzoate + pyruvate. Its pathway is cofactor biosynthesis; ubiquinone biosynthesis. Removes the pyruvyl group from chorismate, with concomitant aromatization of the ring, to provide 4-hydroxybenzoate (4HB) for the ubiquinone pathway. The polypeptide is Probable chorismate pyruvate-lyase 1 (Burkholderia pseudomallei (strain 1710b)).